The sequence spans 920 residues: DNA ligase (920 aa).

Residues 90–94 (DAAYD), 139–140 (SL), and Glu173 each bind NAD(+). The active-site N6-AMP-lysine intermediate is Lys175. Arg196, Glu235, Lys360, and Lys384 together coordinate NAD(+). 4 residues coordinate Zn(2+): Cys481, Cys484, Cys500, and Cys506. The interval 662 to 691 (GEAAIESAETQGDTASETTGAPTGAEAPLG) is disordered. Positions 669-682 (AETQGDTASETTGA) are enriched in polar residues. The region spanning 839 to 920 (SLPQTLAGKT…FAQLLATGTI (82 aa)) is the BRCT domain.

This sequence belongs to the NAD-dependent DNA ligase family. LigA subfamily. Mg(2+) is required as a cofactor. Requires Mn(2+) as cofactor.

It carries out the reaction NAD(+) + (deoxyribonucleotide)n-3'-hydroxyl + 5'-phospho-(deoxyribonucleotide)m = (deoxyribonucleotide)n+m + AMP + beta-nicotinamide D-nucleotide.. DNA ligase that catalyzes the formation of phosphodiester linkages between 5'-phosphoryl and 3'-hydroxyl groups in double-stranded DNA using NAD as a coenzyme and as the energy source for the reaction. It is essential for DNA replication and repair of damaged DNA. The polypeptide is DNA ligase (Bifidobacterium longum (strain DJO10A)).